The primary structure comprises 399 residues: Lysosomal acid lipase/cholesteryl ester hydrolase (399 aa).

The signal sequence occupies residues 1–27 (MKMRFLGLVVCLVLWTLHSEASGGKLT). Residues 28 to 76 (AVNPETNMNVSEIISYWGFPSEEYLVETEDGYILCLNRIPHGRKNHSDK) constitute a propeptide, removed in mature form. N-linked (GlcNAc...) asparagine glycans are attached at residues Asn36, Asn72, Asn101, and Asn161. Residues 80 to 380 (PVVFLQHGLL…EWEHLDFIWG (301 aa)) enclose the AB hydrolase-1 domain. The Charge relay system role is filled by Ser174. Asn273 and Asn321 each carry an N-linked (GlcNAc...) asparagine glycan. The Charge relay system role is filled by His374.

The protein belongs to the AB hydrolase superfamily. Lipase family. In terms of assembly, monomer. In terms of processing, glycosylation is not essential for catalytic activity.

It is found in the lysosome. It catalyses the reaction a sterol ester + H2O = a sterol + a fatty acid + H(+). It carries out the reaction cholesteryl (9Z-octadecenoate) + H2O = cholesterol + (9Z)-octadecenoate + H(+). The enzyme catalyses a triacylglycerol + H2O = a 1,2-diacylglycerol + a fatty acid + H(+). The catalysed reaction is 1,2-di-(9Z-octadecenoyl)-glycerol + (9Z)-octadecenoate + H(+) = 1,2,3-tri-(9Z-octadecenoyl)-glycerol + H2O. It catalyses the reaction a 1,2-diacylglycerol + H2O = a 1-acylglycerol + a fatty acid + H(+). It carries out the reaction 1,2-di-(9Z-octadecenoyl)-glycerol + H2O = 1-(9Z-octadecenoyl)-glycerol + (9Z)-octadecenoate + H(+). The enzyme catalyses a 1,3-diacylglycerol + H2O = a 1-acylglycerol + a fatty acid + H(+). The catalysed reaction is 1,3-di-(9Z-octadecenoyl)-glycerol + H2O = 1-(9Z-octadecenoyl)-glycerol + (9Z)-octadecenoate + H(+). In terms of biological role, catalyzes the deacylation of cholesteryl ester core lipids of endocytosed low density lipoproteins to generate free fatty acids and cholesterol. Hydrolyzes triglycerides (1,2,3-triacylglycerol) and diglycerides (such as 1,2-diacylglycerol and 1,3-diacylglycerol) with preference for the acyl moieties at the sn-1 or sn-3 positions. This is Lysosomal acid lipase/cholesteryl ester hydrolase (LIPA) from Macaca fascicularis (Crab-eating macaque).